The chain runs to 459 residues: Ribosomal protein uS12 methylthiotransferase RimO (459 aa).

Positions 1 to 28 (MSTNPPDLRPDLAPKARLTQPDRPGQPT) are disordered. In terms of domain architecture, MTTase N-terminal spans 27-137 (PTIGMVSLGC…VLDAVHAAVP (111 aa)). The [4Fe-4S] cluster site is built by cysteine 36, cysteine 72, cysteine 101, cysteine 168, cysteine 172, and cysteine 175. Residues 154–387 (LTPRHFSYLK…MAKSQDISEA (234 aa)) form the Radical SAM core domain. A TRAM domain is found at 390 to 457 (AAKVAQRLEV…EYDLWGRLAP (68 aa)).

Belongs to the methylthiotransferase family. RimO subfamily. Requires [4Fe-4S] cluster as cofactor.

The protein resides in the cytoplasm. The enzyme catalyses L-aspartate(89)-[ribosomal protein uS12]-hydrogen + (sulfur carrier)-SH + AH2 + 2 S-adenosyl-L-methionine = 3-methylsulfanyl-L-aspartate(89)-[ribosomal protein uS12]-hydrogen + (sulfur carrier)-H + 5'-deoxyadenosine + L-methionine + A + S-adenosyl-L-homocysteine + 2 H(+). Its function is as follows. Catalyzes the methylthiolation of an aspartic acid residue of ribosomal protein uS12. This chain is Ribosomal protein uS12 methylthiotransferase RimO, found in Roseobacter denitrificans (strain ATCC 33942 / OCh 114) (Erythrobacter sp. (strain OCh 114)).